The primary structure comprises 435 residues: ATP-dependent protease ATPase subunit HslU (435 aa).

ATP-binding positions include isoleucine 18, 60-65 (GVGKTE), aspartate 248, glutamate 313, and arginine 385.

Belongs to the ClpX chaperone family. HslU subfamily. As to quaternary structure, a double ring-shaped homohexamer of HslV is capped on each side by a ring-shaped HslU homohexamer. The assembly of the HslU/HslV complex is dependent on binding of ATP.

It localises to the cytoplasm. In terms of biological role, ATPase subunit of a proteasome-like degradation complex; this subunit has chaperone activity. The binding of ATP and its subsequent hydrolysis by HslU are essential for unfolding of protein substrates subsequently hydrolyzed by HslV. HslU recognizes the N-terminal part of its protein substrates and unfolds these before they are guided to HslV for hydrolysis. The sequence is that of ATP-dependent protease ATPase subunit HslU from Rhizobium etli (strain CIAT 652).